A 419-amino-acid polypeptide reads, in one-letter code: UDP-N-acetylglucosamine 1-carboxyvinyltransferase (419 aa).

Position 22-23 (22-23 (KN)) interacts with phosphoenolpyruvate. R92 lines the UDP-N-acetyl-alpha-D-glucosamine pocket. The active-site Proton donor is C116. C116 is modified (2-(S-cysteinyl)pyruvic acid O-phosphothioketal). UDP-N-acetyl-alpha-D-glucosamine-binding residues include D306 and I328.

The protein belongs to the EPSP synthase family. MurA subfamily.

It localises to the cytoplasm. It carries out the reaction phosphoenolpyruvate + UDP-N-acetyl-alpha-D-glucosamine = UDP-N-acetyl-3-O-(1-carboxyvinyl)-alpha-D-glucosamine + phosphate. It participates in cell wall biogenesis; peptidoglycan biosynthesis. Functionally, cell wall formation. Adds enolpyruvyl to UDP-N-acetylglucosamine. This is UDP-N-acetylglucosamine 1-carboxyvinyltransferase from Pseudoalteromonas translucida (strain TAC 125).